A 667-amino-acid polypeptide reads, in one-letter code: Receptor for retinol uptake STRA6 (667 aa).

Residues 1–13 (MSSQPAGNQTSPG) are compositionally biased toward polar residues. The interval 1 to 22 (MSSQPAGNQTSPGPTEDYSYGS) is disordered. Topologically, residues 1 to 50 (MSSQPAGNQTSPGPTEDYSYGSWYIDEPQGGEELQPEGEVPSCHTSIPPS) are extracellular. The N-linked (GlcNAc...) asparagine glycan is linked to N8. The helical transmembrane segment at 51–71 (LYHACLASLSILVLLLLAMLV) threads the bilayer. Residues 72–98 (RRRQLWPDCVRGRPGLPSPVDFLAGDR) are Cytoplasmic-facing. A helical transmembrane segment spans residues 99–119 (PQAVPAAVFVVLFSSLCLLLP). Residues 120-144 (DEDPLPFLTLASAPSQDGKTEAPRG) lie on the Extracellular side of the membrane. The chain crosses the membrane as a helical span at residues 145 to 165 (AWKILGLFYYAALCYPLAACA). At 166–168 (TAG) the chain is on the cytoplasmic side. Residues 169 to 189 (HTAAHLLGSTLSWAHLGVQVW) form a helical membrane-spanning segment. Residues 190-205 (QRAECPQVPKIYKYYS) lie on the Extracellular side of the membrane. A helical transmembrane segment spans residues 206 to 226 (LLASLPLLLGLGFLSLWYPVQ). Residues 227-295 (LVRSFSCRTG…PQPGFRLPLK (69 aa)) are Cytoplasmic-facing. Residues 235 to 293 (TGAGSKGLQSSYSEEYLRNLLCRKKLGSSSHTSKHGFLSWAWVCLRHCIYTPQPGFRLP) form an interaction with RBP1 region. Residues 296 to 316 (LVLSATLTGTAIYQVALLLLV) form a helical membrane-spanning segment. The Extracellular portion of the chain corresponds to 317–367 (GMVPNIQKVRAGVTTDVSYLLAGFGIVLSEDKQEVVELVKHHLWALEVCYI). A helical membrane pass occupies residues 368 to 388 (SALVLSCSLTFLVLMRSLVTH). Over 389 to 422 (RTNLRALHRGAALDSSPLHRSPHPSRRAIFCWMS) the chain is Cytoplasmic. A helical transmembrane segment spans residues 423 to 443 (FSAYQTAFICLGLLVQQIIFF). The Extracellular portion of the chain corresponds to 444–473 (LGTTALAFLVLMPVLHGRNLLLFRSLESSW). A helical transmembrane segment spans residues 474–494 (PFWLTLALAVILQSMAAHWVF). At 495–509 (LETHDGHPQLTNRRV) the chain is on the cytoplasmic side. Positions 510 to 547 (LYAATFLLFPLNVLVGAMVATWRVLLSALYNAIHLGQM) form an intramembrane region, helical. At 548-667 (DLSLLPPRAA…ALLGANGAQP (120 aa)) the chain is on the cytoplasmic side. At Y643 the chain carries Phosphotyrosine.

As to quaternary structure, homodimer. Interacts with JAK2 and STAT5. Interacts (via extracellular domains) with RBP4. Interacts (via cytoplasmic domains) with RBP1. In terms of processing, phosphorylated on tyrosine residues in response to RBP4 binding. Phosphorylation requires the presence of LRAT, suggesting it may be triggered by the uptake of retinol that is then metabolized within the cell to retinoids that function as signaling molecules.

The protein localises to the cell membrane. Functionally, functions as a retinol transporter. Accepts all-trans retinol from the extracellular retinol-binding protein RBP4, facilitates retinol transport across the cell membrane, and then transfers retinol to the cytoplasmic retinol-binding protein RBP1. Retinol uptake is enhanced by LRAT, an enzyme that converts retinol to all-trans retinyl esters, the storage forms of vitamin A. Contributes to the activation of a signaling cascade that depends on retinol transport and LRAT-dependent generation of retinol metabolites that then trigger activation of JAK2 and its target STAT5, and ultimately increase the expression of SOCS3 and inhibit cellular responses to insulin. Important for the homeostasis of vitamin A and its derivatives, such as retinoic acid. STRA6-mediated transport is particularly important in the eye, and under conditions of dietary vitamin A deficiency. Does not transport retinoic acid. This is Receptor for retinol uptake STRA6 (STRA6) from Pongo abelii (Sumatran orangutan).